The sequence spans 87 residues: Small ribosomal subunit protein bS20 (87 aa).

This sequence belongs to the bacterial ribosomal protein bS20 family.

Functionally, binds directly to 16S ribosomal RNA. The sequence is that of Small ribosomal subunit protein bS20 from Brachyspira hyodysenteriae (strain ATCC 49526 / WA1).